We begin with the raw amino-acid sequence, 229 residues long: MSLFVTFEGPEGSGKSTQARLLYESLYARRYPVILTREPGGTRIGDLIRRIVLDLQHTEMAPTTETLLFSAARAQLVSEVIRPYLEQGGIVLCDRYADSTYAYQGYGLGRDLAELRTITAAATGGLRPDITFYLDISAEDGLERKRRKHPGARLMGQRGVDQEWNRLDARELEYHQRVEAGYRALIAQDPERWRVLDARQSIEALAEQIAAIVEPYLASIPQLEAVPYS.

9–16 provides a ligand contact to ATP; sequence GPEGSGKS.

It belongs to the thymidylate kinase family.

The enzyme catalyses dTMP + ATP = dTDP + ADP. In terms of biological role, phosphorylation of dTMP to form dTDP in both de novo and salvage pathways of dTTP synthesis. This chain is Thymidylate kinase, found in Roseiflexus castenholzii (strain DSM 13941 / HLO8).